Here is a 216-residue protein sequence, read N- to C-terminus: Redox-sensing transcriptional repressor Rex 1 (216 aa).

Positions 16–55 form a DNA-binding region, H-T-H motif; that stretch reads LYYRYLRMLHDTGKNKVSSTELSEAVQVDSATIRRDFSYF. Residue 90 to 95 coordinates NAD(+); the sequence is GVGNLG.

The protein belongs to the transcriptional regulatory Rex family. Homodimer.

The protein localises to the cytoplasm. Functionally, modulates transcription in response to changes in cellular NADH/NAD(+) redox state. The polypeptide is Redox-sensing transcriptional repressor Rex 1 (Enterococcus faecalis (strain ATCC 700802 / V583)).